Consider the following 89-residue polypeptide: Small ribosomal subunit protein bS18 (89 aa).

This sequence belongs to the bacterial ribosomal protein bS18 family. As to quaternary structure, part of the 30S ribosomal subunit. Forms a tight heterodimer with protein bS6.

In terms of biological role, binds as a heterodimer with protein bS6 to the central domain of the 16S rRNA, where it helps stabilize the platform of the 30S subunit. The chain is Small ribosomal subunit protein bS18 from Parabacteroides distasonis (strain ATCC 8503 / DSM 20701 / CIP 104284 / JCM 5825 / NCTC 11152).